Reading from the N-terminus, the 265-residue chain is Sulfur carrier protein FdhD (265 aa).

The Cysteine persulfide intermediate role is filled by Cys-107.

The protein belongs to the FdhD family.

Its subcellular location is the cytoplasm. Its function is as follows. Required for formate dehydrogenase (FDH) activity. Acts as a sulfur carrier protein that transfers sulfur from IscS to the molybdenum cofactor prior to its insertion into FDH. This is Sulfur carrier protein FdhD from Staphylococcus aureus (strain MRSA252).